A 292-amino-acid chain; its full sequence is Small ribosomal subunit biogenesis GTPase RsgA (292 aa).

A CP-type G domain is found at 64–221; that stretch reads RSELFRPAVA…LVDTPGFSSL (158 aa). GTP is bound by residues 113–116 and 164–172; these read NKMD and GPSGVGKST. Zn(2+) is bound by residues C245, C250, H252, and C258.

Belongs to the TRAFAC class YlqF/YawG GTPase family. RsgA subfamily. As to quaternary structure, monomer. Associates with 30S ribosomal subunit, binds 16S rRNA. Zn(2+) is required as a cofactor.

It is found in the cytoplasm. Its function is as follows. One of several proteins that assist in the late maturation steps of the functional core of the 30S ribosomal subunit. Helps release RbfA from mature subunits. May play a role in the assembly of ribosomal proteins into the subunit. Circularly permuted GTPase that catalyzes slow GTP hydrolysis, GTPase activity is stimulated by the 30S ribosomal subunit. The sequence is that of Small ribosomal subunit biogenesis GTPase RsgA from Clostridium botulinum (strain Kyoto / Type A2).